The following is a 205-amino-acid chain: Holliday junction branch migration complex subunit RuvA (205 aa).

The tract at residues 1–64 (MIGKLKGVID…EDMIRLYGFA (64 aa)) is domain I. The tract at residues 65–143 (NQLEREWFRL…AFAGDASGTI (79 aa)) is domain II. Positions 144–152 (GLKQELGAG) are flexible linker. The tract at residues 153 to 205 (AAPAPVADAVSALSNLGYSRDQAANAVAAALKEAGENADSAKLIRLGLKELSR) is domain III.

This sequence belongs to the RuvA family. Homotetramer. Forms an RuvA(8)-RuvB(12)-Holliday junction (HJ) complex. HJ DNA is sandwiched between 2 RuvA tetramers; dsDNA enters through RuvA and exits via RuvB. An RuvB hexamer assembles on each DNA strand where it exits the tetramer. Each RuvB hexamer is contacted by two RuvA subunits (via domain III) on 2 adjacent RuvB subunits; this complex drives branch migration. In the full resolvosome a probable DNA-RuvA(4)-RuvB(12)-RuvC(2) complex forms which resolves the HJ.

It is found in the cytoplasm. Its function is as follows. The RuvA-RuvB-RuvC complex processes Holliday junction (HJ) DNA during genetic recombination and DNA repair, while the RuvA-RuvB complex plays an important role in the rescue of blocked DNA replication forks via replication fork reversal (RFR). RuvA specifically binds to HJ cruciform DNA, conferring on it an open structure. The RuvB hexamer acts as an ATP-dependent pump, pulling dsDNA into and through the RuvAB complex. HJ branch migration allows RuvC to scan DNA until it finds its consensus sequence, where it cleaves and resolves the cruciform DNA. The polypeptide is Holliday junction branch migration complex subunit RuvA (Brucella anthropi (strain ATCC 49188 / DSM 6882 / CCUG 24695 / JCM 21032 / LMG 3331 / NBRC 15819 / NCTC 12168 / Alc 37) (Ochrobactrum anthropi)).